The sequence spans 412 residues: Putative competence-damage inducible protein (412 aa).

The protein belongs to the CinA family.

This Bacillus anthracis protein is Putative competence-damage inducible protein.